A 600-amino-acid polypeptide reads, in one-letter code: DNA primase (600 aa).

The segment at 38 to 62 (CPFHDEKTPSFIVYPTRGHYHCYGC) adopts a CHC2-type zinc-finger fold. One can recognise a Toprim domain in the interval 253-333 (KRVILVEGQA…GIAVIVCRLP (81 aa)). 3 residues coordinate Mg(2+): Glu259, Asp304, and Asp306.

Belongs to the DnaG primase family. In terms of assembly, monomer. Interacts with DnaB. Zn(2+) is required as a cofactor. Mg(2+) serves as cofactor.

It catalyses the reaction ssDNA + n NTP = ssDNA/pppN(pN)n-1 hybrid + (n-1) diphosphate.. Functionally, RNA polymerase that catalyzes the synthesis of short RNA molecules used as primers for DNA polymerase during DNA replication. The protein is DNA primase of Chlamydia muridarum (strain MoPn / Nigg).